A 74-amino-acid chain; its full sequence is WAP four-disulfide core domain protein 18 (74 aa).

A signal peptide spans 1–24 (MKTATVFVLVALIFMTMTTAWALS). The region spanning 26–73 (PKEKPGACPKPPPRSFGTCDERCTGDGSCSGNMKCCSNGCGHACKPPV) is the WAP domain.

The protein localises to the secreted. Its function is as follows. Could have proteinase inhibiting capacity. This Bos taurus (Bovine) protein is WAP four-disulfide core domain protein 18 (WFDC18).